Reading from the N-terminus, the 304-residue chain is Lipoprotein signal peptidase (304 aa).

Transmembrane regions (helical) follow at residues 28–48 (IKIKYPILAVMGFFVLLIVFV), 86–106 (PAVPYLLQSLLTIIFLITFIF), and 112–132 (LIVLLPLITFGGLANVIDRSV). Residues D148 and D163 contribute to the active site. The chain crosses the membrane as a helical span at residues 163–183 (DICIVTGFALIFLTFVVDIFL).

This sequence belongs to the peptidase A8 family.

It is found in the cell membrane. It catalyses the reaction Release of signal peptides from bacterial membrane prolipoproteins. Hydrolyzes -Xaa-Yaa-Zaa-|-(S,diacylglyceryl)Cys-, in which Xaa is hydrophobic (preferably Leu), and Yaa (Ala or Ser) and Zaa (Gly or Ala) have small, neutral side chains.. It participates in protein modification; lipoprotein biosynthesis (signal peptide cleavage). Functionally, this protein specifically catalyzes the removal of signal peptides from prolipoproteins. This chain is Lipoprotein signal peptidase, found in Mycoplasmoides gallisepticum (strain R(low / passage 15 / clone 2)) (Mycoplasma gallisepticum).